The sequence spans 322 residues: Replication factor C small subunit (322 aa).

45 to 52 (GPPGVGKT) contacts ATP.

Belongs to the activator 1 small subunits family. RfcS subfamily. In terms of assembly, heteromultimer composed of small subunits (RfcS) and large subunits (RfcL).

Part of the RFC clamp loader complex which loads the PCNA sliding clamp onto DNA. The sequence is that of Replication factor C small subunit from Methanocella arvoryzae (strain DSM 22066 / NBRC 105507 / MRE50).